Consider the following 425-residue polypeptide: Mothers against decapentaplegic homolog 3 (425 aa).

Residue serine 2 is modified to N-acetylserine. The residue at position 8 (threonine 8) is a Phosphothreonine; by CDK2 and CDK4. An MH1 domain is found at proline 10 to proline 136. Lysine 33 is covalently cross-linked (Glycyl lysine isopeptide (Lys-Gly) (interchain with G-Cter in ubiquitin)). Cysteine 64 contacts Zn(2+). Lysine 81 is covalently cross-linked (Glycyl lysine isopeptide (Lys-Gly) (interchain with G-Cter in ubiquitin)). Cysteine 109, cysteine 121, and histidine 126 together coordinate Zn(2+). The linker stretch occupies residues proline 137 to phenylalanine 231. Residues asparagine 165–proline 177 are compositionally biased toward polar residues. Positions asparagine 165–serine 208 are disordered. At threonine 179 the chain carries Phosphothreonine; by CDK2, CDK4 and MAPK. The residue at position 204 (serine 204) is a Phosphoserine; by GSK3 and MAPK. Position 208 is a phosphoserine; by MAPK (serine 208). Position 213 is a phosphoserine; by CDK2 and CDK4 (serine 213). Residues tryptophan 232–serine 425 form the MH2 domain. The segment at leucine 271 to tyrosine 324 is sufficient for interaction with XPO4. Lysine 378 carries the post-translational modification N6-acetyllysine. Phosphoserine is present on serine 416. A Phosphoserine; by CK1 modification is found at serine 418. Serine 422, serine 423, and serine 425 each carry phosphoserine; by TGFBR1.

The protein belongs to the dwarfin/SMAD family. As to quaternary structure, monomer; in the absence of TGF-beta. Homooligomer; in the presence of TGF-beta. Heterotrimer; forms a heterotrimer in the presence of TGF-beta consisting of two molecules of C-terminally phosphorylated SMAD2 or SMAD3 and one of SMAD4 to form the transcriptionally active SMAD2/SMAD3-SMAD4 complex. Part of a complex consisting of MAGI2/ARIP1, ACVR2A, ACVR1B and SMAD3. Forms a complex with SMAD2 and TRIM33 upon addition of TGF-beta. Found in a complex composed of SMAD3, RAN and XPO4; within the complex interacts directly with XPO4. Component of the multimeric complex SMAD3/SMAD4/JUN/FOS which forms at the AP1 promoter site; required for synergistic transcriptional activity in response to TGF-beta. Part of a ternary complex composed of SMAD3, ITCH/AIP4 and NEDD9/HEF1; within the complex NEDD9/HEF1 interacts (via N-terminus) with ITCH/AIP4; the complex mediates ubiquitination and proteasomal degradation of NEDD9/HEF1. Interacts with NEDD9; the interaction promotes NEDD9 ubiquitination and proteasomal degradation. Interacts (via an N-terminal domain) with JUN (via its basic DNA binding and leucine zipper domains); this interaction is essential for DNA binding and cooperative transcriptional activity in response to TGF-beta. Identified in a complex that contains at least ZNF451, SMAD2, SMAD3 and SMAD4. Interacts with PPM1A; the interaction dephosphorylates SMAD3 in the C-terminal SXS motif leading to disruption of the SMAD2/3-SMAD4 complex, nuclear export and termination of TGF-beta signaling. Interacts (via MH2 domain) with ZMIZ1 (via SP-RING-type domain); in the TGF-beta signaling pathway increases the activity of the SMAD3/SMAD4 transcriptional complex. Interacts (when phosphorylated) with RNF111; RNF111 acts as an enhancer of the transcriptional responses by mediating ubiquitination and degradation of SMAD3 inhibitors. Interacts (dephosphorylated form via the MH1 and MH2 domains) with RANBP3 (via its C-terminal R domain); the interaction results in the export of dephosphorylated SMAD3 out of the nucleus and termination of the TGF-beta signaling. Interacts (via MH2 domain) with LEMD3; the interaction represses SMAD3 transcriptional activity through preventing the formation of the heteromeric complex with SMAD4 and translocation to the nucleus. Interacts (via the linker region) with EP300 (C-terminal); the interaction promotes SMAD3 acetylation and is enhanced by TGF-beta phosphorylation in the C-terminal of SMAD3. This interaction can be blocked by competitive binding of adenovirus oncoprotein E1A to the same C-terminal site on EP300, which then results in partially inhibited SMAD3/SMAD4 transcriptional activity. Interacts with TGFBR1. Interacts with TGFB1I1. Interacts with PRDM16. Interacts with SNW1. Interacts (via MH2 domain) with ZFYVE9. Interacts with HDAC1. Interacts with TGIF2. Interacts with SKOR1. Interacts with SKOR2. Interacts with DACH1; the interaction inhibits the TGF-beta signaling. Interacts with RBPMS. Interacts (via MH2 domain) with MECOM. Interacts with WWTR1 (via its coiled-coil domain). Interacts with SKI; the interaction represses SMAD3 transcriptional activity. Interacts with MEN1. Interacts with IL1F7. Interaction with CSNK1G2. Interacts with PDPK1 (via PH domain). Interacts with DAB2; the interactions are enhanced upon TGF-beta stimulation. Interacts with USP15. Interacts with PPP5C; the interaction decreases SMAD3 phosphorylation and protein levels. Interacts with LDLRAD4 (via the SMAD interaction motif). Interacts with PMEPA1. Interacts with ZNF451. Interacts with ZFHX3. Interacts weakly with ZNF8. Interacts with STUB1, HSPA1A, HSPA1B, HSP90AA1 and HSP90AB1. Interacts with YAP1 (when phosphorylated at 'Ser-55'). Interacts with MAGI2/ARIP1. Interacts (via MH2 domain) with CITED2 (via C-terminus). Interacts with HGS. Interacts with WWP1. Interacts with TTRAP. Interacts with FOXL2. Interacts with PML. Interacts with NEDD4L; the interaction requires TGF-beta stimulation. Interacts with ZC3H3. Interacts with TGIF. Interacts with CREBBP. Interacts with ATF2. Interacts with NEDD9; the interaction is inhibited by oxidation of NEDD9. Interacts with MTMR4; negatively regulates TGF-beta signaling through SMAD3 dephosphorylation and retention in endosomes. Phosphorylated on serine and threonine residues. Enhanced phosphorylation in the linker region on Thr-179, Ser-204 and Ser-208 on EGF and TGF-beta treatment. Ser-208 is the main site of MAPK-mediated phosphorylation. CDK-mediated phosphorylation occurs in a cell-cycle dependent manner and inhibits both the transcriptional activity and antiproliferative functions of SMAD3. This phosphorylation is inhibited by flavopiridol. Maximum phosphorylation at the G(1)/S junction. Also phosphorylated on serine residues in the C-terminal SXS motif by TGFBR1 and ACVR1. TGFBR1-mediated phosphorylation at these C-terminal sites is required for interaction with SMAD4, nuclear location and transactivational activity, and appears to be a prerequisite for the TGF-beta mediated phosphorylation in the linker region. Dephosphorylated in the C-terminal SXS motif by PPM1A. This dephosphorylation disrupts the interaction with SMAD4, promotes nuclear export and terminates TGF-beta-mediated signaling. Phosphorylation at Ser-418 by CSNK1G2/CK1 promotes ligand-dependent ubiquitination and subsequent proteasome degradation, thus inhibiting SMAD3-mediated TGF-beta responses. Phosphorylated by PDPK1. Post-translationally, acetylation in the nucleus by EP300 in the MH2 domain regulates positively its transcriptional activity and is enhanced by TGF-beta. In terms of processing, poly-ADP-ribosylated by PARP1 and PARP2. ADP-ribosylation negatively regulates SMAD3 transcriptional responses during the course of TGF-beta signaling. Ubiquitinated. Monoubiquitinated, leading to prevent DNA-binding. Deubiquitination by USP15 alleviates inhibition and promotes activation of TGF-beta target genes. Ubiquitinated by RNF111, leading to its degradation: only SMAD3 proteins that are 'in use' are targeted by RNF111, RNF111 playing a key role in activating SMAD3 and regulating its turnover. Undergoes STUB1-mediated ubiquitination and degradation. In terms of tissue distribution, highly expressed in the brain and ovary. Detected in the pyramidal cells of the hippocampus, granule cells of the dentate gyrus, granular cells of the cerebral cortex and the granulosa cells of the ovary.

It is found in the cytoplasm. The protein resides in the nucleus. Functionally, receptor-regulated SMAD (R-SMAD) that is an intracellular signal transducer and transcriptional modulator activated by TGF-beta (transforming growth factor) and activin type 1 receptor kinases. Binds the TRE element in the promoter region of many genes that are regulated by TGF-beta and, on formation of the SMAD3/SMAD4 complex, activates transcription. Also can form a SMAD3/SMAD4/JUN/FOS complex at the AP-1/SMAD site to regulate TGF-beta-mediated transcription. Has an inhibitory effect on wound healing probably by modulating both growth and migration of primary keratinocytes and by altering the TGF-mediated chemotaxis of monocytes. This effect on wound healing appears to be hormone-sensitive. Regulator of chondrogenesis and osteogenesis and inhibits early healing of bone fractures. Positively regulates PDPK1 kinase activity by stimulating its dissociation from the 14-3-3 protein YWHAQ which acts as a negative regulator. The protein is Mothers against decapentaplegic homolog 3 (SMAD3) of Sus scrofa (Pig).